The chain runs to 472 residues: GTPase Der (472 aa).

2 consecutive EngA-type G domains span residues 3-166 (AVIA…PPAE) and 178-351 (IPVA…AAAH). GTP-binding positions include 9–16 (GRPNVGKS), 56–60 (DTGGM), 118–121 (NKTD), 184–191 (GRPNVGKS), 231–235 (DTAGV), and 296–299 (NKWD). Residues 352–436 (RDLATPELND…PVRIECRASD (85 aa)) enclose the KH-like domain. The interval 434 to 472 (ASDNPFADKPNQLTERQRRRRQRVIHHAKKREKKRKRRR) is disordered. Over residues 450-472 (QRRRRQRVIHHAKKREKKRKRRR) the composition is skewed to basic residues.

Belongs to the TRAFAC class TrmE-Era-EngA-EngB-Septin-like GTPase superfamily. EngA (Der) GTPase family. Associates with the 50S ribosomal subunit.

In terms of biological role, GTPase that plays an essential role in the late steps of ribosome biogenesis. The protein is GTPase Der of Halorhodospira halophila (strain DSM 244 / SL1) (Ectothiorhodospira halophila (strain DSM 244 / SL1)).